A 183-amino-acid chain; its full sequence is TATA box-binding protein-like 1 (183 aa).

Belongs to the TBP family. As to quaternary structure, binds TFIIA and TFIIB. In terms of tissue distribution, present in the brain, heart, liver and gizzard.

The protein localises to the cytoplasm. The protein resides in the nucleus. In terms of biological role, part of a specialized transcription system that mediates the transcription of most ribosomal proteins through the 5'-TCT-3' motif which is a core promoter element at these genes. Seems to also mediate the transcription of NF1. Does not bind the TATA box. The chain is TATA box-binding protein-like 1 (TBPL1) from Gallus gallus (Chicken).